A 385-amino-acid polypeptide reads, in one-letter code: Trans-enoyl reductase poxH (385 aa).

Residue 64 to 67 (QPYS) coordinates NADP(+). 156 to 163 (PDPAAPPI) contacts substrate. NADP(+)-binding positions include 199–202 (STSV), 223–226 (SGTD), Tyr241, and 289–290 (LG). 309–313 (HMAPL) serves as a coordination point for substrate. Residue 372 to 373 (KR) coordinates NADP(+).

Belongs to the zinc-containing alcohol dehydrogenase family. In terms of assembly, monomer.

Its pathway is secondary metabolite biosynthesis. Functionally, trans-enoyl reductase; part of the gene cluster that mediates the biosynthesis of oxaleimides, cytotoxic compounds containing an unusual disubstituted succinimide moiety. The first step of the pathway is provided by the HR-PKS poxF that serves in a new mode of collaborative biosynthesis with the PKS-NRPS poxE, by providing the olefin containing amino acid substrate via the synthesis of an ACP-bound dec-4-enoate. The cytochrome P450 monooxygenase poxM-catalyzed oxidation at the alpha-position creates the enzyme-bound 2-hydroxydec-4-enoyl-ACP thioester, which may be prone to spontaneous hydrolysis to yield 2-hydroxydec-4-enoic acid due to increased electrophilicity of the carbonyl. 2-hydroxydec-4-enoic acid can then be further oxidized by poxM to yield the alpha-ketoacid 2-oxodec-4-enoicacid, which is reductively aminated by the aminotransferase poxL to yield (S,E)-2-aminodec-4-enoic acid. The Hybrid PKS-NRPS synthetase poxE then performs condensation between the octaketide product of its PKS modules and the amino group of (S,E)-2-aminodec-4-enoic acid which is activated and incorporated by the adenylation domain. The resulting aminoacyl product can be cyclized by the Diels-Alderase PoxQ and reductively released by the reductive (R) domain of poxE to yield an aldehyde intermediate. The released aldehyde is then substrate for a Knoevenagel condensation by the hydrolyase poxO followed by an oxidation at the 5-position of the pyrrolidone ring. The presence of the olefin from the amino acid building block allows for migration of the substituted allyl group to occur. This allylic transposition reaction takes place in a conjugate addition, semipinacol-like fashion to yield a succinimide intermediate. Iterative two-electron oxidations of the C7 methyl of the succinimide intermediate to the carboxylic acid can be catalyzed by one of two remaining cytochrome P450 monooxygenasess poxC or poxD to yield oxaleimide A. Subsequent oxidation yields the maleimide scaffold oxaleimide I. Both oxaleimide A and oxaleimide I can undergo oxidative modifications in the decalin ring to yield the series of products oxaleimides B to H. This is Trans-enoyl reductase poxH from Penicillium oxalicum.